Consider the following 477-residue polypeptide: Trigger factor (477 aa).

Positions 174-261 constitute a PPIase FKBP-type domain; the sequence is GDIAVVSFKG…LKDLKEKELP (88 aa). The tract at residues 435–477 is disordered; it reads VNEKTTKTSKATKTSKTTKATKTATKTTKTTKTTKTQNKKEKK. Residues 442-470 are compositionally biased toward low complexity; it reads TSKATKTSKTTKATKTATKTTKTTKTTKT.

This sequence belongs to the FKBP-type PPIase family. Tig subfamily.

It is found in the cytoplasm. It carries out the reaction [protein]-peptidylproline (omega=180) = [protein]-peptidylproline (omega=0). In terms of biological role, involved in protein export. Acts as a chaperone by maintaining the newly synthesized protein in an open conformation. Functions as a peptidyl-prolyl cis-trans isomerase. In Prochlorococcus marinus (strain MIT 9301), this protein is Trigger factor.